Consider the following 376-residue polypeptide: Fructose-1,6-bisphosphate aldolase/phosphatase (376 aa).

Catalysis depends on aspartate 11, which acts as the Proton acceptor; for FBP phosphatase activity. Aspartate 11, histidine 18, aspartate 49, and aspartate 50 together coordinate Mg(2+). Residue histidine 18 participates in beta-D-fructose 1,6-bisphosphate binding. Histidine 18 lines the dihydroxyacetone phosphate pocket. Tyrosine 87 provides a ligand contact to beta-D-fructose 1,6-bisphosphate. Glutamine 91 provides a ligand contact to Mg(2+). 100-101 (GN) lines the beta-D-fructose 1,6-bisphosphate pocket. Aspartate 128 is a Mg(2+) binding site. Lysine 129 contributes to the beta-D-fructose 1,6-bisphosphate binding site. Lysine 129 contacts dihydroxyacetone phosphate. Residue tyrosine 224 is the Proton donor/acceptor; for FBP aldolase activity of the active site. The Mg(2+) site is built by lysine 227, aspartate 228, and aspartate 229. Lysine 227 functions as the Schiff-base intermediate with DHAP; for FBP aldolase activity in the catalytic mechanism. Residues 237 to 238 (QK), arginine 261, and tyrosine 342 contribute to the beta-D-fructose 1,6-bisphosphate site. Arginine 261 is a dihydroxyacetone phosphate binding site. Positions 357-376 (MVPLKDSGPAGTGRAYEDPD) are disordered.

It belongs to the FBP aldolase/phosphatase family. As to quaternary structure, homooctamer; dimer of tetramers. Requires Mg(2+) as cofactor.

It catalyses the reaction beta-D-fructose 1,6-bisphosphate + H2O = beta-D-fructose 6-phosphate + phosphate. It carries out the reaction beta-D-fructose 1,6-bisphosphate = D-glyceraldehyde 3-phosphate + dihydroxyacetone phosphate. It functions in the pathway carbohydrate biosynthesis; gluconeogenesis. Its function is as follows. Catalyzes two subsequent steps in gluconeogenesis: the aldol condensation of dihydroxyacetone phosphate (DHAP) and glyceraldehyde-3-phosphate (GA3P) to fructose-1,6-bisphosphate (FBP), and the dephosphorylation of FBP to fructose-6-phosphate (F6P). The polypeptide is Fructose-1,6-bisphosphate aldolase/phosphatase (Cenarchaeum symbiosum (strain A)).